The primary structure comprises 329 residues: Ribosomal RNA small subunit methyltransferase H (329 aa).

Residues 47-49 (GGH), aspartate 67, phenylalanine 93, aspartate 115, and glutamine 122 contribute to the S-adenosyl-L-methionine site.

Belongs to the methyltransferase superfamily. RsmH family.

It localises to the cytoplasm. It catalyses the reaction cytidine(1402) in 16S rRNA + S-adenosyl-L-methionine = N(4)-methylcytidine(1402) in 16S rRNA + S-adenosyl-L-homocysteine + H(+). In terms of biological role, specifically methylates the N4 position of cytidine in position 1402 (C1402) of 16S rRNA. This chain is Ribosomal RNA small subunit methyltransferase H, found in Blochmanniella pennsylvanica (strain BPEN).